A 240-amino-acid chain; its full sequence is UDP-2,3-diacylglucosamine hydrolase (240 aa).

Aspartate 8, histidine 10, aspartate 41, asparagine 79, and histidine 114 together coordinate Mn(2+). 79-80 (NR) is a substrate binding site. Substrate-binding residues include aspartate 122, serine 160, asparagine 164, lysine 167, and histidine 195. 2 residues coordinate Mn(2+): histidine 195 and histidine 197.

The protein belongs to the LpxH family. Mn(2+) is required as a cofactor.

The protein localises to the cell inner membrane. The enzyme catalyses UDP-2-N,3-O-bis[(3R)-3-hydroxytetradecanoyl]-alpha-D-glucosamine + H2O = 2-N,3-O-bis[(3R)-3-hydroxytetradecanoyl]-alpha-D-glucosaminyl 1-phosphate + UMP + 2 H(+). Its pathway is glycolipid biosynthesis; lipid IV(A) biosynthesis; lipid IV(A) from (3R)-3-hydroxytetradecanoyl-[acyl-carrier-protein] and UDP-N-acetyl-alpha-D-glucosamine: step 4/6. Its function is as follows. Hydrolyzes the pyrophosphate bond of UDP-2,3-diacylglucosamine to yield 2,3-diacylglucosamine 1-phosphate (lipid X) and UMP by catalyzing the attack of water at the alpha-P atom. Involved in the biosynthesis of lipid A, a phosphorylated glycolipid that anchors the lipopolysaccharide to the outer membrane of the cell. This Escherichia coli O6:H1 (strain CFT073 / ATCC 700928 / UPEC) protein is UDP-2,3-diacylglucosamine hydrolase.